We begin with the raw amino-acid sequence, 53 residues long: ATP synthase protein 8 (53 aa).

Residues 10-30 form a helical membrane-spanning segment; the sequence is IMVFLVSMALLWAIMTMVFFL.

Belongs to the ATPase protein 8 family. In terms of assembly, F-type ATPases have 2 components, CF(1) - the catalytic core - and CF(0) - the membrane proton channel.

It is found in the mitochondrion membrane. Mitochondrial membrane ATP synthase (F(1)F(0) ATP synthase or Complex V) produces ATP from ADP in the presence of a proton gradient across the membrane which is generated by electron transport complexes of the respiratory chain. F-type ATPases consist of two structural domains, F(1) - containing the extramembraneous catalytic core and F(0) - containing the membrane proton channel, linked together by a central stalk and a peripheral stalk. During catalysis, ATP synthesis in the catalytic domain of F(1) is coupled via a rotary mechanism of the central stalk subunits to proton translocation. Part of the complex F(0) domain. Minor subunit located with subunit a in the membrane. In Artemia franciscana (Brine shrimp), this protein is ATP synthase protein 8 (MT-ATP8).